A 116-amino-acid chain; its full sequence is uncharacterized protein (116 aa).

An RRM domain is found at 6–83 (ATVHVGNLAP…RCIRVSPANF (78 aa)).

The protein localises to the cytoplasm. Its subcellular location is the nucleus. This is an uncharacterized protein from Schizosaccharomyces pombe (strain 972 / ATCC 24843) (Fission yeast).